We begin with the raw amino-acid sequence, 458 residues long: BPI fold-containing family B member 2 (458 aa).

The first 20 residues, 1 to 20 (MAWASRLGLLLALLLPVVGA), serve as a signal peptide directing secretion. Threonine 52 is subject to Phosphothreonine; by FAM20C. Serine 60 is modified (phosphoserine; by FAM20C). Residues asparagine 96, asparagine 151, asparagine 293, and asparagine 332 are each glycosylated (N-linked (GlcNAc...) asparagine). Cysteine 137 and cysteine 174 are disulfide-bonded.

It belongs to the BPI/LBP/Plunc superfamily. BPI/LBP family. As to expression, highly expressed in tonsils, especially in hypertrophic tonsils. Detected at very low levels in fetal liver.

It localises to the secreted. The protein is BPI fold-containing family B member 2 (BPIFB2) of Homo sapiens (Human).